Here is a 110-residue protein sequence, read N- to C-terminus: MSKAIIKFVRLSPTKARLIAREVQGMNAELALASLQFMPNRGAKFIANAISSAVANGGFEPEEVVVSSCRVDAGPVLKRFRPRARGTASKIRKPTSHVMVEVSKAQKKEA.

The segment covering Arg85–Thr95 has biased composition (basic residues). A disordered region spans residues Arg85–Ala110.

This sequence belongs to the universal ribosomal protein uL22 family. Part of the 50S ribosomal subunit.

Its function is as follows. This protein binds specifically to 23S rRNA; its binding is stimulated by other ribosomal proteins, e.g. L4, L17, and L20. It is important during the early stages of 50S assembly. It makes multiple contacts with different domains of the 23S rRNA in the assembled 50S subunit and ribosome. In terms of biological role, the globular domain of the protein is located near the polypeptide exit tunnel on the outside of the subunit, while an extended beta-hairpin is found that lines the wall of the exit tunnel in the center of the 70S ribosome. This chain is Large ribosomal subunit protein uL22, found in Campylobacter curvus (strain 525.92).